A 232-amino-acid polypeptide reads, in one-letter code: 2-C-methyl-D-erythritol 4-phosphate cytidylyltransferase (232 aa).

Belongs to the IspD/TarI cytidylyltransferase family. IspD subfamily.

It catalyses the reaction 2-C-methyl-D-erythritol 4-phosphate + CTP + H(+) = 4-CDP-2-C-methyl-D-erythritol + diphosphate. The protein operates within isoprenoid biosynthesis; isopentenyl diphosphate biosynthesis via DXP pathway; isopentenyl diphosphate from 1-deoxy-D-xylulose 5-phosphate: step 2/6. Its function is as follows. Catalyzes the formation of 4-diphosphocytidyl-2-C-methyl-D-erythritol from CTP and 2-C-methyl-D-erythritol 4-phosphate (MEP). The protein is 2-C-methyl-D-erythritol 4-phosphate cytidylyltransferase of Bacillus velezensis (strain DSM 23117 / BGSC 10A6 / LMG 26770 / FZB42) (Bacillus amyloliquefaciens subsp. plantarum).